The sequence spans 434 residues: MKRVYSKIECIAGNVITVTAQGIKYGELAIVKAKDTSSLAEVIKLDREKVSLQVYGGTRGISTSDEIKFLGHSMQVSFSDNLLGRIFDGSGNPRDGGPSLDDNLIEIGGPSANPAKRIVPRNMIRTGLPMIDVFNTLVESQKLPIFSVSGEPYNELLLRIALQAEVDLIILGGMGLKHDDYLTFKDSLEKGGALSRTIFFVHTANDSVVESLTVPDISLSVAEKFALKGKKVLVLLTDMTNFADAMKEISITMEQVPSNRGYPGDLYSQLAYRYEKAIDFEGAGSITILTVTTMPGDDVTHPVPDNTGYITEGQYYLKGGRIEPFGSLSRLKQMVNGRTRDDHRTIMDSMIKLYASSKDSVEKKAMGFNMTKWDEKLLKYSNMFESKMMDLSVNIPLEEALDLGWDILASCFSPKETGIKTDLIEKYWPKKETS.

Belongs to the ATPase alpha/beta chains family.

Functionally, produces ATP from ADP in the presence of a proton gradient across the membrane. The V-type beta chain is a regulatory subunit. In Borrelia garinii subsp. bavariensis (strain ATCC BAA-2496 / DSM 23469 / PBi) (Borreliella bavariensis), this protein is V-type ATP synthase beta chain.